Here is a 365-residue protein sequence, read N- to C-terminus: Isopentenyl-diphosphate delta-isomerase (365 aa).

Residue arginine 4–lysine 5 coordinates substrate. FMN is bound by residues glycine 62–threonine 64, serine 92, and asparagine 121. Residue serine 92–arginine 94 coordinates substrate. Substrate is bound at residue glutamine 155. Glutamate 156 contributes to the Mg(2+) binding site. FMN contacts are provided by residues lysine 187, threonine 216, glycine 267 to arginine 269, and alanine 288 to leucine 289.

Belongs to the IPP isomerase type 2 family. In terms of assembly, homooctamer. Dimer of tetramers. FMN is required as a cofactor. Requires NADPH as cofactor. The cofactor is Mg(2+).

The protein localises to the cytoplasm. The enzyme catalyses isopentenyl diphosphate = dimethylallyl diphosphate. Involved in the biosynthesis of isoprenoids. Catalyzes the 1,3-allylic rearrangement of the homoallylic substrate isopentenyl (IPP) to its allylic isomer, dimethylallyl diphosphate (DMAPP). This is Isopentenyl-diphosphate delta-isomerase from Methanopyrus kandleri (strain AV19 / DSM 6324 / JCM 9639 / NBRC 100938).